The chain runs to 119 residues: Large ribosomal subunit protein bL20 (119 aa).

The protein belongs to the bacterial ribosomal protein bL20 family.

Binds directly to 23S ribosomal RNA and is necessary for the in vitro assembly process of the 50S ribosomal subunit. It is not involved in the protein synthesizing functions of that subunit. This chain is Large ribosomal subunit protein bL20, found in Granulibacter bethesdensis (strain ATCC BAA-1260 / CGDNIH1).